The sequence spans 344 residues: MEVGIIGATGYSGLELIRLLKNHPQVTNIMLYSSSQSGETINRLYPHLQNEQWKPLKEIDLNKISAEIDVMFLATPPGVSAEWSGPLLEAGLSVIDLSGDLRLTDRGVYEKWYKRPSAKEGLIEQAIYGLSEWNKSTIKTAKLIANPGCFPTAALLALIPLIQAGAIERDSIVIDAKSGTSGAGKSPTSMTHFSETNENFKIYQVASHKHTPEIEQQLAKWGAQPPLSFQPHLAPMVRGIMATIYAKAAKPLSNEWLTDCYNSAYENAPFVRIKENGTFPATKHVFGSNYCDIGFCYDERTGRVIVASVIDNLMKGAAGQAVQNFNLMHGFDETAGLEAVPMYP.

Residue cysteine 149 is part of the active site.

The protein belongs to the NAGSA dehydrogenase family. Type 1 subfamily.

The protein localises to the cytoplasm. It carries out the reaction N-acetyl-L-glutamate 5-semialdehyde + phosphate + NADP(+) = N-acetyl-L-glutamyl 5-phosphate + NADPH + H(+). Its pathway is amino-acid biosynthesis; L-arginine biosynthesis; N(2)-acetyl-L-ornithine from L-glutamate: step 3/4. Catalyzes the NADPH-dependent reduction of N-acetyl-5-glutamyl phosphate to yield N-acetyl-L-glutamate 5-semialdehyde. The protein is N-acetyl-gamma-glutamyl-phosphate reductase of Shouchella clausii (strain KSM-K16) (Alkalihalobacillus clausii).